A 363-amino-acid chain; its full sequence is Somatostatin receptor type 5 (363 aa).

Residues 1-35 are Extracellular-facing; sequence MEPLSLASTPSWNASAASSGNHNWSLVGSASPMGA. Asn-13 and Asn-23 each carry an N-linked (GlcNAc...) asparagine glycan. The chain crosses the membrane as a helical span at residues 36–63; sequence RAVLVPVLYLLVCTVGLSGNTLVIYVVL. Residues 64 to 73 lie on the Cytoplasmic side of the membrane; that stretch reads RHAKMKTVTN. A helical transmembrane segment spans residues 74-99; it reads VYILNLAVADVLFMLGLPFLATQNAV. Residues 100–111 are Extracellular-facing; sequence VSYWPFGSFLCR. A disulfide bond links Cys-110 and Cys-185. Residues 112 to 133 form a helical membrane-spanning segment; that stretch reads LVMTLDGINQFTSIFCLMVMSV. Residues 134 to 155 lie on the Cytoplasmic side of the membrane; the sequence is DRYLAVVHPLRSARWRRPRVAK. A helical transmembrane segment spans residues 156 to 176; it reads MASAAVWVFSLLMSLPLLVFA. The Extracellular segment spans residues 177–196; it reads DVQEGWGTCNLSWPEPVGLW. An N-linked (GlcNAc...) asparagine glycan is attached at Asn-186. A helical membrane pass occupies residues 197–221; sequence GAAFITYTSVLGFFGPLLVICLCYL. At 222–247 the chain is on the cytoplasmic side; sequence LIVVKVKAAGMRVGSSRRRRSEPKVT. Residues 248-273 form a helical membrane-spanning segment; sequence RMVVVVVLVFVGCWLPFFIVNIVNLA. At 274–283 the chain is on the extracellular side; sequence FTLPEEPTSA. Residues 284-308 traverse the membrane as a helical segment; the sequence is GLYFFVVVLSYANSCANPLLYGFLS. Residues 309–363 lie on the Cytoplasmic side of the membrane; the sequence is DNFRQSFRKVLCLRRGYGMEDADAIEPRPDKSGRPQATLPTRSCEANGLMQTSRI. A lipid anchor (S-palmitoyl cysteine; by ZDHHC5) is attached at Cys-320. The disordered stretch occupies residues 331–363; it reads DAIEPRPDKSGRPQATLPTRSCEANGLMQTSRI.

It belongs to the G-protein coupled receptor 1 family. As to quaternary structure, heterodimer with SSTR2. Heterodimerization with SSTR2 increases cell growth inhibition activity of SSTR2. Post-translationally, palmitoylated at Cys-320 by ZDHHC5, but not ZDHHC8. Palmitoylation creates an additional intracellular loop which is thought to be important for efficient coupling to G-proteins and may target the protein to lipid rafts. In terms of tissue distribution, prominent in the pituitary and small intestine. Low levels in islets and spleen. Not detected in kidney, pancreas, cerebellum, or cortex.

The protein localises to the cell membrane. In terms of biological role, receptor for somatostatin-28. The activity of this receptor is mediated by G proteins which inhibit adenylyl cyclase. Increases cell growth inhibition activity of SSTR2 following heterodimerization. This chain is Somatostatin receptor type 5 (Sstr5), found in Rattus norvegicus (Rat).